The primary structure comprises 133 residues: Ribosome-binding factor A (133 aa).

Belongs to the RbfA family. Monomer. Binds 30S ribosomal subunits, but not 50S ribosomal subunits or 70S ribosomes.

It localises to the cytoplasm. Its function is as follows. One of several proteins that assist in the late maturation steps of the functional core of the 30S ribosomal subunit. Associates with free 30S ribosomal subunits (but not with 30S subunits that are part of 70S ribosomes or polysomes). Required for efficient processing of 16S rRNA. May interact with the 5'-terminal helix region of 16S rRNA. This is Ribosome-binding factor A from Pseudomonas fluorescens (strain ATCC BAA-477 / NRRL B-23932 / Pf-5).